The primary structure comprises 246 residues: Probable transcriptional regulatory protein COSY_0365 (246 aa).

The protein belongs to the TACO1 family.

The protein resides in the cytoplasm. This is Probable transcriptional regulatory protein COSY_0365 from Vesicomyosocius okutanii subsp. Calyptogena okutanii (strain HA).